Reading from the N-terminus, the 352-residue chain is tRNA pseudouridine synthase D (352 aa).

Asp81 serves as the catalytic Nucleophile. The 147-residue stretch at 157–303 folds into the TRUD domain; sequence GVPNYFGAQR…MDHERRILRL (147 aa).

It belongs to the pseudouridine synthase TruD family.

The catalysed reaction is uridine(13) in tRNA = pseudouridine(13) in tRNA. Responsible for synthesis of pseudouridine from uracil-13 in transfer RNAs. This chain is tRNA pseudouridine synthase D, found in Pseudomonas entomophila (strain L48).